Consider the following 26-residue polypeptide: Hemocyanin subunit 3 (26 aa).

The protein belongs to the tyrosinase family. Hemocyanin subfamily. As to expression, hemolymph.

The protein localises to the secreted. The protein resides in the extracellular space. Functionally, hemocyanins are copper-containing oxygen carriers occurring freely dissolved in the hemolymph of many mollusks and arthropods. The sequence is that of Hemocyanin subunit 3 from Homarus americanus (American lobster).